We begin with the raw amino-acid sequence, 414 residues long: STAGA complex 65 subunit gamma (414 aa).

Residues 87-108 (NQQQTEGVKTEESEPLPSCPGS) are disordered. A Phosphoserine modification is found at Ser-108. Lys-271 participates in a covalent cross-link: Glycyl lysine isopeptide (Lys-Gly) (interchain with G-Cter in SUMO2). Residues Ser-323 and Ser-334 each carry the phosphoserine modification. The interval 346–414 (PQESEEGNVS…QRCKKRMRKI (69 aa)) is disordered. Over residues 386–395 (SSYGSHSTDS) the composition is skewed to low complexity.

As to quaternary structure, component of the STAGA transcription coactivator-HAT complex, at least composed of SUPT3H, SUPT7L, GCN5L2, TAF5L, TAF6L, TADA3L, TAD1L, TAF10, TAF12 and TAF9. Sumoylated. In terms of tissue distribution, expressed at high levels in adenocarcinomas and gliomas and low in esophageal cancers and malignant hematological disease. Also expressed at high level in the thymus, low in peripheral blood mononuclear cells, and lowest in the stomach, small intestine, and skeletal muscle.

The protein resides in the nucleus. The sequence is that of STAGA complex 65 subunit gamma (SUPT7L) from Homo sapiens (Human).